Consider the following 398-residue polypeptide: Phosphoglycerate kinase (398 aa).

Residues 21–23 (DFN), R36, 59–62 (HLGR), R119, and R157 contribute to the substrate site. ATP-binding positions include K208, G296, E327, and 354-357 (GGDS).

The protein belongs to the phosphoglycerate kinase family. As to quaternary structure, monomer.

Its subcellular location is the cytoplasm. It carries out the reaction (2R)-3-phosphoglycerate + ATP = (2R)-3-phospho-glyceroyl phosphate + ADP. It functions in the pathway carbohydrate degradation; glycolysis; pyruvate from D-glyceraldehyde 3-phosphate: step 2/5. The protein is Phosphoglycerate kinase of Streptococcus equi subsp. zooepidemicus (strain H70).